Consider the following 123-residue polypeptide: Small ribosomal subunit protein uS12 (123 aa).

Aspartate 89 is modified (3-methylthioaspartic acid).

It belongs to the universal ribosomal protein uS12 family. As to quaternary structure, part of the 30S ribosomal subunit. Contacts proteins S8 and S17. May interact with IF1 in the 30S initiation complex.

With S4 and S5 plays an important role in translational accuracy. Its function is as follows. Interacts with and stabilizes bases of the 16S rRNA that are involved in tRNA selection in the A site and with the mRNA backbone. Located at the interface of the 30S and 50S subunits, it traverses the body of the 30S subunit contacting proteins on the other side and probably holding the rRNA structure together. The combined cluster of proteins S8, S12 and S17 appears to hold together the shoulder and platform of the 30S subunit. This chain is Small ribosomal subunit protein uS12, found in Pelagibacter ubique (strain HTCC1062).